Consider the following 859-residue polypeptide: Leucine--tRNA ligase (859 aa).

Positions 42–52 match the 'HIGH' region motif; that stretch reads PYPSGRLHMGH. The 'KMSKS' region motif lies at 618–622; the sequence is KMSKS. K621 contacts ATP.

Belongs to the class-I aminoacyl-tRNA synthetase family.

The protein resides in the cytoplasm. It catalyses the reaction tRNA(Leu) + L-leucine + ATP = L-leucyl-tRNA(Leu) + AMP + diphosphate. The protein is Leucine--tRNA ligase of Shewanella woodyi (strain ATCC 51908 / MS32).